A 257-amino-acid polypeptide reads, in one-letter code: Ethanolamine ammonia-lyase small subunit (257 aa).

3 residues coordinate adenosylcob(III)alamin: valine 153, glutamate 174, and cysteine 203.

Belongs to the EutC family. The basic unit is a heterodimer which dimerizes to form tetramers. The heterotetramers trimerize; 6 large subunits form a core ring with 6 small subunits projecting outwards. The cofactor is adenosylcob(III)alamin.

Its subcellular location is the bacterial microcompartment. The catalysed reaction is ethanolamine = acetaldehyde + NH4(+). It participates in amine and polyamine degradation; ethanolamine degradation. In terms of biological role, catalyzes the deamination of various vicinal amino-alcohols to oxo compounds. Allows this organism to utilize ethanolamine as the sole source of nitrogen and carbon in the presence of external vitamin B12. This chain is Ethanolamine ammonia-lyase small subunit, found in Rhodococcus erythropolis (Arthrobacter picolinophilus).